The chain runs to 211 residues: Uridine kinase (211 aa).

ATP is bound at residue 12–19 (GGSGSGKT).

The protein belongs to the uridine kinase family.

The protein localises to the cytoplasm. It carries out the reaction uridine + ATP = UMP + ADP + H(+). It catalyses the reaction cytidine + ATP = CMP + ADP + H(+). It participates in pyrimidine metabolism; CTP biosynthesis via salvage pathway; CTP from cytidine: step 1/3. It functions in the pathway pyrimidine metabolism; UMP biosynthesis via salvage pathway; UMP from uridine: step 1/1. This Geobacillus sp. (strain WCH70) protein is Uridine kinase.